We begin with the raw amino-acid sequence, 474 residues long: 3-isopropylmalate dehydratase large subunit (474 aa).

3 residues coordinate [4Fe-4S] cluster: C352, C413, and C416.

This sequence belongs to the aconitase/IPM isomerase family. LeuC type 1 subfamily. As to quaternary structure, heterodimer of LeuC and LeuD. It depends on [4Fe-4S] cluster as a cofactor.

It carries out the reaction (2R,3S)-3-isopropylmalate = (2S)-2-isopropylmalate. It functions in the pathway amino-acid biosynthesis; L-leucine biosynthesis; L-leucine from 3-methyl-2-oxobutanoate: step 2/4. Catalyzes the isomerization between 2-isopropylmalate and 3-isopropylmalate, via the formation of 2-isopropylmaleate. The chain is 3-isopropylmalate dehydratase large subunit from Pseudomonas syringae pv. syringae (strain B728a).